The sequence spans 359 residues: RNA-binding protein 4B (359 aa).

2 RRM domains span residues 2-72 and 78-148; these read VKLF…ASKN and TKLH…LSTS. The CCHC-type zinc finger occupies 160-177; the sequence is SGCYRCGKEGHWSKECPV. The segment at 196–359 is interaction with TNPO3; the sequence is AVRTPYTMGY…YVDRARYSAF (164 aa).

Interacts with TNPO3, which may mediate nuclear import of the protein. In terms of tissue distribution, expressed in liver and kidney (at protein level). Ubiquitously expressed.

The protein localises to the nucleus. Its subcellular location is the nucleolus. In terms of biological role, required for the translational activation of PER1 mRNA in response to circadian clock. Binds directly to the 3'-UTR of the PER1 mRNA. In Homo sapiens (Human), this protein is RNA-binding protein 4B (RBM4B).